Consider the following 66-residue polypeptide: MQRGKVKWFNNEKGYGFIEVEGGSDVFVHFTAIQGEGFKSLEEGQEVSFEIVQGNRGPQAANVVKL.

The CSD domain maps to 4-63 (GKVKWFNNEKGYGFIEVEGGSDVFVHFTAIQGEGFKSLEEGQEVSFEIVQGNRGPQAANV).

As to quaternary structure, homodimer.

It is found in the cytoplasm. In terms of biological role, affects cell viability at low temperatures. This is Cold shock protein CspB (cspB) from Geobacillus stearothermophilus (Bacillus stearothermophilus).